The primary structure comprises 383 residues: S-adenosylmethionine synthase (383 aa).

His15 is a binding site for ATP. Asp17 lines the Mg(2+) pocket. Glu43 is a K(+) binding site. 2 residues coordinate L-methionine: Glu56 and Gln99. The flexible loop stretch occupies residues 99–109 (QSPDINQGVDR). ATP-binding positions include 164 to 166 (DAK), 230 to 231 (RF), Asp239, 245 to 246 (RK), Ala262, and Lys266. L-methionine is bound at residue Asp239. L-methionine is bound at residue Lys270.

This sequence belongs to the AdoMet synthase family. As to quaternary structure, homotetramer; dimer of dimers. Mg(2+) serves as cofactor. K(+) is required as a cofactor.

The protein localises to the cytoplasm. The catalysed reaction is L-methionine + ATP + H2O = S-adenosyl-L-methionine + phosphate + diphosphate. The protein operates within amino-acid biosynthesis; S-adenosyl-L-methionine biosynthesis; S-adenosyl-L-methionine from L-methionine: step 1/1. In terms of biological role, catalyzes the formation of S-adenosylmethionine (AdoMet) from methionine and ATP. The overall synthetic reaction is composed of two sequential steps, AdoMet formation and the subsequent tripolyphosphate hydrolysis which occurs prior to release of AdoMet from the enzyme. The sequence is that of S-adenosylmethionine synthase from Pseudoalteromonas translucida (strain TAC 125).